The sequence spans 445 residues: Mitochondrial enolase superfamily member 1 (445 aa).

Residues 24–26 (GSD), Tyr34, and Lys220 contribute to the substrate site. The Proton donor/acceptor role is filled by Lys222. Asp250 provides a ligand contact to Mg(2+). Substrate contacts are provided by residues Asn252, Glu276, Glu305, 355–357 (HAG), and Glu386. Mg(2+)-binding residues include Glu276 and Glu305. His355 is an active-site residue.

It belongs to the mandelate racemase/muconate lactonizing enzyme family. ENOSF1 subfamily. Mg(2+) serves as cofactor.

Its subcellular location is the mitochondrion. It carries out the reaction L-fuconate = 2-dehydro-3-deoxy-L-fuconate + H2O. In terms of biological role, plays a role in the catabolism of L-fucose, a sugar that is part of the carbohydrates that are attached to cellular glycoproteins. Catalyzes the dehydration of L-fuconate to 2-keto-3-deoxy-L-fuconate by the abstraction of the 2-proton to generate an enediolate intermediate that is stabilized by the magnesium ion. May down-regulate thymidylate synthase activity, possibly already at the RNA level, by promoting the degradation of TYMS mRNA via an antisense RNA-based mechanism. The sequence is that of Mitochondrial enolase superfamily member 1 (enosf1) from Xenopus laevis (African clawed frog).